An 825-amino-acid chain; its full sequence is ATP-dependent RNA helicase DBP4 (825 aa).

Residues 1–34 (MAAGNAKGGFAHRNKSVPKKTDAKSLKRKRGQED) are disordered. Over residues 19–34 (KKTDAKSLKRKRGQED) the composition is skewed to basic and acidic residues. Residues 53 to 81 (KQFTDLPLCEATASGLRASHFEVLTDVQR) carry the Q motif motif. Positions 84–258 (IPLALKGRDI…RLSLKEPEYV (175 aa)) constitute a Helicase ATP-binding domain. 97–104 (AKTGSGKT) is a binding site for ATP. A DEAD box motif is present at residues 206–209 (DEAD). Residues 284–439 (KLDTLFGFLR…NKKKSIKNEL (156 aa)) enclose the Helicase C-terminal domain. Disordered regions lie at residues 508 to 536 (NASR…KQVR) and 676 to 825 (AESE…LLED). Composition is skewed to basic and acidic residues over residues 677-691 (ESEK…DKQA) and 700-714 (RERQ…ELER). Acidic residues-rich tracts occupy residues 730–739 (GEGDEGDEDP), 761–770 (GEDEGDDGEV), and 805–816 (MAEEPENLEDLE).

The protein belongs to the DEAD box helicase family. DDX10/DBP4 subfamily. Interacts with the U3 and U14 snoRNAs. Associates with pre-ribosomal complexes.

It localises to the nucleus. The protein localises to the nucleolus. It catalyses the reaction ATP + H2O = ADP + phosphate + H(+). Functionally, ATP-dependent RNA helicase required for ribosome biogenesis. Involved in the release of U14 snoRNA in pre-ribosomal complexes. Required for pre-rRNA cleavage at site A2. The polypeptide is ATP-dependent RNA helicase DBP4 (DBP4) (Chaetomium globosum (strain ATCC 6205 / CBS 148.51 / DSM 1962 / NBRC 6347 / NRRL 1970) (Soil fungus)).